A 421-amino-acid polypeptide reads, in one-letter code: Phosphoglycerate kinase (421 aa).

Residues V23, D24, F25, N26, Q41, R42, S65, H66, G68, R69, L124, R125, H172, and R173 each coordinate (2R)-3-phosphoglycerate. Residue G216 coordinates ADP. CDP is bound at residue G216. An AMP-binding site is contributed by K218. Residue D221 coordinates CDP. Mg(2+) is bound at residue D221. K222 is a binding site for AMP. K222 contributes to the ATP binding site. G240 is a binding site for ADP. Position 240 (G240) interacts with CDP. Residues G241 and G315 each contribute to the AMP site. G241 and G315 together coordinate ATP. Residues G340 and F345 each contribute to the CDP site. F345 contacts ADP. Position 346 (E346) interacts with AMP. Positions 346, 377, and 378 each coordinate ATP. A Mg(2+)-binding site is contributed by D377.

This sequence belongs to the phosphoglycerate kinase family. Monomer. Mg(2+) serves as cofactor.

The protein localises to the cytoplasm. Its subcellular location is the mitochondrion. It carries out the reaction (2R)-3-phosphoglycerate + ATP = (2R)-3-phospho-glyceroyl phosphate + ADP. It functions in the pathway carbohydrate degradation; glycolysis; pyruvate from D-glyceraldehyde 3-phosphate: step 2/5. Functionally, catalyzes one of the two ATP producing reactions in the glycolytic pathway via the reversible conversion of 1,3-diphosphoglycerate to 3-phosphoglycerate. Both L- and D- forms of purine and pyrimidine nucleotides can be used as substrates, but the activity is much lower on pyrimidines. Negatively regulates the biosynthesis of acetyl-CoA from pyruvate in the mitochondrion. The polypeptide is Phosphoglycerate kinase (pgkA) (Emericella nidulans (strain FGSC A4 / ATCC 38163 / CBS 112.46 / NRRL 194 / M139) (Aspergillus nidulans)).